We begin with the raw amino-acid sequence, 237 residues long: Sugar fermentation stimulation protein homolog (237 aa).

The protein belongs to the SfsA family.

The protein is Sugar fermentation stimulation protein homolog of Pseudomonas fluorescens (strain ATCC BAA-477 / NRRL B-23932 / Pf-5).